We begin with the raw amino-acid sequence, 513 residues long: Sphingolipid C9-methyltransferase 1 (513 aa).

Transmembrane regions (helical) follow at residues 63 to 83 and 85 to 105; these read FLVA…GGGL and TAIF…WTVM. S-adenosyl-L-methionine-binding positions include 228 to 229, 265 to 273, 291 to 296, and 321 to 322; these read YT, LLDIGCGWG, TLARNQ, and YR.

Belongs to the CFA/CMAS family.

The protein localises to the membrane. It carries out the reaction a (4E,8E)-4-sphinga-4,8-dienine ceramide + S-adenosyl-L-methionine = a 9-methyl-(4E,8E)-sphinga-4,8-dienine ceramide + S-adenosyl-L-homocysteine + H(+). It participates in lipid metabolism; sphingolipid metabolism. Functionally, catalyzes methylation of the sphingoid base component of glucosylceramides (GluCers) at the C9-position. Sphingolipid C9-methylation requires 4,8-desaturated ceramides as substrates. Glucosylceramides play important roles in the growth, differentiation and pathogenicity. The methyl group at the C9-position distinguishes fungal glucosylceramides from those of plants and animals, and may thus play a role in host-pathogen interactions enabling the host to recognize the fungal attack and initiate specific defense responses. However, C-9 methylation of GlcCers is not essential for the sensitivity of F.graminearum to plant defensins MsDef1 and RsAFP2. This chain is Sphingolipid C9-methyltransferase 1, found in Gibberella zeae (strain ATCC MYA-4620 / CBS 123657 / FGSC 9075 / NRRL 31084 / PH-1) (Wheat head blight fungus).